The following is a 341-amino-acid chain: MLRGGPCGAHWRPALALALLGLATILGASPTSGQRWPVPYKRFSFRPKTDPYCQAKYTFCPTGSPIPVMKDNDVIEVLRLQAPIWEFKYGDLLGHFKLMHDAVGFRSTLTGKNYTIEWYELFQLGNCTFPHLRPDKSAPFWCNQGAACFFEGIDDKHWKENGTLSVVATISGNTFNKVAEWVKQDNETGIYYETWTVRAGPGQGAQTWFESYDCSNFVLRTYKKLAEFGTEFKKIETNYTKIFLYSGEPIYLGNETSIFGPKGNKTLALAIKKFYGPFRPYLSTKDFLMNFLKIFDTVIIHRQFYLFYNFEYWFLPMKPPFVKITYEETPLPTRHTTFTDL.

The Cytoplasmic portion of the chain corresponds to 1–13 (MLRGGPCGAHWRP). The chain crosses the membrane as a helical; Signal-anchor for type II membrane protein span at residues 14-30 (ALALALLGLATILGASP). Residues 31–341 (TSGQRWPVPY…PTRHTTFTDL (311 aa)) lie on the Lumenal side of the membrane. Intrachain disulfides connect C53-C142 and C60-C148. H100 functions as the Proton acceptor in the catalytic mechanism. Residues N113, N126, N161, and N186 are each glycosylated (N-linked (GlcNAc...) asparagine). Catalysis depends on C214, which acts as the Nucleophile; Acyl-thioester intermediate. 3 N-linked (GlcNAc...) asparagine glycosylation sites follow: N238, N254, and N264. The interval 287 to 326 (FLMNFLKIFDTVIIHRQFYLFYNFEYWFLPMKPPFVKITY) is membrane-anchoring.

Belongs to the CLN5 family. As to quaternary structure, multimer. Interacts with PPT1, TPP1, CLN3, CLN6, CLN8, ATP5F1A and ATP5F1B. Interacts with SORT1, RAB5A and RAB7A. In terms of processing, N-glycosylated with both high mannose and complex type sugars. Glycosylation is important for proper folding and trafficking to the lysosomes. Post-translationally, the type II membrane signal anchor is proteolytically cleaved to produce a mature form that is transported to the lysosomes (Bis(monoacylglycero)phosphate synthase CLN5, secreted form). Can undergo proteolytic cleavage at the C-terminus, probably by a cysteine protease and may involve the removal of approximately 10-15 residues from the C-terminal end. Heart, kidney, liver, spleen, muscle and rectum (at protein level).

It is found in the lysosome. The protein localises to the membrane. The catalysed reaction is S-hexadecanoyl-L-cysteinyl-[protein] + H2O = L-cysteinyl-[protein] + hexadecanoate + H(+). The enzyme catalyses 2 1-acyl-sn-glycero-3-phospho-(1'-sn-glycerol) = 1-acyl-sn-glycero-3-phospho-(3'-acyl-sn-1'-glycerol) + sn-glycero-3-phospho-(1'-sn-glycerol). It catalyses the reaction 2 1-(9Z-octadecenoyl)-sn-glycero-3-phospho-(1'-sn-glycerol) = 1-(9Z-octadecenoyl)-sn-glycero-3-phospho-(3'-(9Z-octadecenoyl)-1'-sn-glycerol) + sn-glycero-3-phospho-(1'-sn-glycerol). It carries out the reaction 2 1-octadecanoyl-sn-glycero-3-phospho-(1'-sn-glycerol) = 1-octadecanoyl-sn-glycero-3-phospho-(3'-octadecanoyl-1'-sn-glycerol) + sn-glycero-3-phospho-(1'-sn-glycerol). The catalysed reaction is 2 1-hexadecanoyl-sn-glycero-3-phospho-(1'-sn-glycerol) = 1-hexadecanoyl-sn-glycero-3-phospho-(3'-hexadecanoyl-1'-sn-glycerol) + sn-glycero-3-phospho-(1'-sn-glycerol). The enzyme catalyses 2 1-tetradecanoyl-sn-glycero-3-phospho-(1'-sn-glycerol) = 1-tetradecanoyl-sn-glycero-3-phospho-(3'-tetradecanoyl-1'-sn-glycerol) + sn-glycero-3-phospho-(1'-sn-glycerol). Functionally, catalyzes the synthesis of bis(monoacylglycero)phosphate (BMP) via transacylation of 2 molecules of lysophosphatidylglycerol (LPG). BMP also known as lysobisphosphatidic acid plays a key role in the formation of intraluminal vesicles and in maintaining intracellular cholesterol homeostasis. Can use only LPG as the exclusive lysophospholipid acyl donor for base exchange and displays BMP synthase activity towards various LPGs (LPG 14:0, LPG 16:0, LPG 18:0, LPG 18:1) with a higher preference for longer chain lengths. Plays a role in influencing the retrograde trafficking of lysosomal sorting receptors SORT1 and IGF2R from the endosomes to the trans-Golgi network by controlling the recruitment of retromer complex to the endosomal membrane. Regulates the localization and activation of RAB7A which is required to recruit the retromer complex to the endosomal membrane. In terms of biological role, exhibits palmitoyl protein thioesterase (S-depalmitoylation) activity in vitro and most likely plays a role in protein S-depalmitoylation. In Mus musculus (Mouse), this protein is Bis(monoacylglycero)phosphate synthase CLN5 (Cln5).